Here is a 277-residue protein sequence, read N- to C-terminus: MAISTIQIILIFIWSSVVGMGSVLDEFQTHRPLIACSIMGLILGDPKTGIILGGTLELIALGWMNIGAAQSPDSALASTISTILVIVGNQDIQKGIAIALPVAAAGQVLTVLARTVTVAFQHAADREAEKANFTAIIWLHFTALIVQALRVSIPTTIVAVFVSPEEIKSMLDALPEVITGGLAVAGGFIVVVGYAMILNMMSVKYLMPFFYQGFVLGGYLKLSLLAWGAVGLIFAIVYVQLNPKFATNHNNGTGGSGGTVAAAGDHPAALPEDELDD.

5 helical membrane-spanning segments follow: residues 1-21 (MAIS…VGMG), 92-112 (IQKG…LTVL), 133-153 (FTAI…RVSI), 177-197 (VITG…YAMI), and 219-239 (YLKL…IVYV). The PTS EIIC type-4 domain maps to 3–237 (ISTIQIILIF…GAVGLIFAIV (235 aa)).

It localises to the cell membrane. Functionally, the phosphoenolpyruvate-dependent sugar phosphotransferase system (PTS), a major carbohydrate active transport system, catalyzes the phosphorylation of incoming sugar substrates concomitant with their translocation across the cell membrane. The enzyme II SorABCD PTS system is involved in L-sorbose transport. This chain is PTS system sorbose-specific EIIC component, found in Lacticaseibacillus casei (Lactobacillus casei).